The following is a 662-amino-acid chain: 72 kDa type IV collagenase (662 aa).

A signal peptide spans 1–29 (MEARLVWGVLVGPLRVLCVLCCLLGHAIA). Residues 30-109 (APSPIIKFPG…PRCGNPDVAN (80 aa)) constitute a propeptide, activation peptide. A Cysteine switch motif is present at residues 100–107 (PRCGNPDV). Zn(2+) is bound at residue Cys-102. Residues 110–221 (YNFFPRKPKW…LWTLGEGQVV (112 aa)) are collagenase-like 1. Residues Asp-134 and Asp-168 each coordinate Ca(2+). Positions 178 and 180 each coordinate Zn(2+). The Ca(2+) site is built by Asp-185 and Gly-186. His-193 contacts Zn(2+). Gly-200, Gly-202, and Asp-204 together coordinate Ca(2+). Zn(2+) is bound at residue His-206. Positions 208, 209, and 211 each coordinate Ca(2+). Residues 222–396 (RVKYGNADGE…WGFCPDQGYS (175 aa)) are collagen-binding. Fibronectin type-II domains are found at residues 228–276 (ADGE…FCPH), 286–334 (GDGQ…FCPE), and 344–392 (SEGA…FCPD). 6 disulfide bridges follow: Cys-233-Cys-259, Cys-247-Cys-274, Cys-291-Cys-317, Cys-305-Cys-332, Cys-349-Cys-375, and Cys-363-Cys-390. The interval 397 to 467 (LFLVAAHEFG…GPTPTLGPVT (71 aa)) is collagenase-like 2. Residue His-403 coordinates Zn(2+). The active site involves Glu-404. 2 residues coordinate Zn(2+): His-407 and His-413. The segment at 414–662 (SQDPGALMAP…GSIKSDWLGC (249 aa)) is required for inhibitor TIMP2 binding. Residues Cys-471 and Cys-662 are joined by a disulfide bond. Hemopexin repeat units follow at residues 474-518 (DIVF…WPEL), 519-565 (PEKI…GLPP), 567-615 (VQQV…WNAI), and 616-662 (PDNL…WLGC). Residues Asp-478, Asp-523, and Asp-571 each contribute to the Ca(2+) site. Asn-575 is a glycosylation site (N-linked (GlcNAc...) asparagine). Asp-620 is a binding site for Ca(2+). N-linked (GlcNAc...) asparagine glycosylation occurs at Asn-644.

This sequence belongs to the peptidase M10A family. As to quaternary structure, interacts (via the C-terminal hemopexin-like domains-containing region) with the integrin alpha-V/beta-3; the interaction promotes vascular invasion in angiogenic vessels and melamoma cells. Interacts (via the C-terminal PEX domain) with TIMP2 (via the C-terminal); the interaction inhibits the degradation activity. Interacts with GSK3B. It depends on Ca(2+) as a cofactor. Zn(2+) is required as a cofactor. In terms of processing, phosphorylation on multiple sites modulates enzymatic activity. Phosphorylated by PKC in vitro. The propeptide is processed by MMP14 (MT-MMP1) and MMP16 (MT-MMP3). Autocatalytic cleavage in the C-terminal produces the anti-angiogenic peptide, PEX. This processing appears to be facilitated by binding integrin integrinv/beta3.

It is found in the secreted. Its subcellular location is the extracellular space. It localises to the extracellular matrix. The protein localises to the membrane. The protein resides in the nucleus. It carries out the reaction Cleavage of gelatin type I and collagen types IV, V, VII, X. Cleaves the collagen-like sequence Pro-Gln-Gly-|-Ile-Ala-Gly-Gln.. Functionally, ubiquitinous metalloproteinase that is involved in diverse functions such as remodeling of the vasculature, angiogenesis, tissue repair, tumor invasion, inflammation, and atherosclerotic plaque rupture. As well as degrading extracellular matrix proteins, can also act on several nonmatrix proteins such as big endothelial 1 and beta-type CGRP promoting vasoconstriction. Also cleaves KISS at a Gly-|-Leu bond. Appears to have a role in myocardial cell death pathways. Contributes to myocardial oxidative stress by regulating the activity of GSK3beta. Cleaves GSK3beta in vitro. Involved in the formation of the fibrovascular tissues. Its function is as follows. PEX, the C-terminal non-catalytic fragment of MMP2, possesses anti-angiogenic and anti-tumor properties and inhibits cell migration and cell adhesion to FGF2 and vitronectin. Ligand for integrin alpha-v/beta3 on the surface of blood vessels. This is 72 kDa type IV collagenase (Mmp2) from Rattus norvegicus (Rat).